Consider the following 253-residue polypeptide: Phosphonates import ATP-binding protein PhnC (253 aa).

In terms of domain architecture, ABC transporter spans 4–247 (VRFEGVTKRF…QAVAMIYRAG (244 aa)). 36–43 (GLSGSGKS) provides a ligand contact to ATP.

It belongs to the ABC transporter superfamily. Phosphonates importer (TC 3.A.1.9.1) family. In terms of assembly, the complex is composed of two ATP-binding proteins (PhnC), two transmembrane proteins (PhnE) and a solute-binding protein (PhnD).

The protein localises to the cell membrane. The catalysed reaction is phosphonate(out) + ATP + H2O = phosphonate(in) + ADP + phosphate + H(+). Functionally, part of the ABC transporter complex PhnCDE involved in phosphonates import. Responsible for energy coupling to the transport system. The chain is Phosphonates import ATP-binding protein PhnC from Frankia casuarinae (strain DSM 45818 / CECT 9043 / HFP020203 / CcI3).